The following is a 92-amino-acid chain: Small ribosomal subunit protein uS19 (92 aa).

Belongs to the universal ribosomal protein uS19 family.

Protein S19 forms a complex with S13 that binds strongly to the 16S ribosomal RNA. The polypeptide is Small ribosomal subunit protein uS19 (Corynebacterium diphtheriae (strain ATCC 700971 / NCTC 13129 / Biotype gravis)).